A 200-amino-acid chain; its full sequence is Large ribosomal subunit protein uL29 (200 aa).

The large ribosomal subunit protein uL29 stretch occupies residues 1 to 107; sequence MTIAKELKQK…KQETKKAEVK (107 aa). A disordered region spans residues 92–200; that stretch reads STKPESKQET…KMIKTKEKKQ (109 aa). A compositionally biased stretch (basic and acidic residues) spans 93–179; that stretch reads TKPESKQETK…QEVKKVEAKK (87 aa). Residues 108 to 200 are unknown; it reads PKVESKPESK…KMIKTKEKKQ (93 aa). A compositionally biased stretch (basic residues) spans 186–200; it reads KPVKAKMIKTKEKKQ.

The protein belongs to the universal ribosomal protein uL29 family.

The polypeptide is Large ribosomal subunit protein uL29 (Mycoplasma genitalium (strain ATCC 33530 / DSM 19775 / NCTC 10195 / G37) (Mycoplasmoides genitalium)).